The chain runs to 31 residues: Dermaseptin-DI3 (31 aa).

It belongs to the frog skin active peptide (FSAP) family. Dermaseptin subfamily. As to expression, expressed by the skin glands.

Its subcellular location is the secreted. Functionally, antibacterial activity against Gram-positive bacteria S.aureus and E.faecalis, and Gram-negative bacteria P.aeruginosa and E.coli. This is Dermaseptin-DI3 from Phyllomedusa distincta (Monkey frog).